A 1322-amino-acid polypeptide reads, in one-letter code: FERM and PDZ domain-containing protein 4 (1322 aa).

A WW domain is found at 33–66 (QVPPYGWEMTANRDGRDYFINHMTQAIPFDDPRL). Residues 78 to 155 (KVEMRRDPVL…SILLTVIQPY (78 aa)) enclose the PDZ domain. In terms of domain architecture, FERM spans 204–519 (NVLKVYLENG…GYYRLLVDSR (316 aa)). 7 disordered regions span residues 809-847 (APPP…EIPV), 900-927 (SPES…TAQK), 952-983 (EFPA…PPKV), 1027-1080 (RKSK…STFN), 1105-1148 (SGLE…GQGD), 1160-1180 (AKDL…PSKL), and 1207-1227 (HFSL…TGSS). A compositionally biased stretch (low complexity) spans 902-921 (ESSSDSGNETNSSEMTESSE). Low complexity predominate over residues 1041–1054 (NGNTTGKKQQGTKT). Residues 1067 to 1080 (TVSSRDSQHLSTFN) are compositionally biased toward polar residues. The span at 1207–1217 (HFSLQSSQGSS) shows a compositional bias: polar residues.

In terms of assembly, interacts (via C-terminus) with DLG1, DLG2, DLG3 and DLG4/PSD95. Interacts (via N-terminus) with ARHGEF7; the interaction is mediated by the PDZ domain. Interacts with GPSM2 (via TPR repeat region).

It is found in the cell projection. The protein resides in the dendritic spine. Functionally, positive regulator of dendritic spine morphogenesis and density. Required for the maintenance of excitatory synaptic transmission. Binds phosphatidylinositol 4,5-bisphosphate. This Homo sapiens (Human) protein is FERM and PDZ domain-containing protein 4 (FRMPD4).